We begin with the raw amino-acid sequence, 513 residues long: Gluconokinase (513 aa).

Residues lysine 16, threonine 261, glycine 300, and 412 to 416 (GFARS) each bind ATP.

It belongs to the FGGY kinase family.

The enzyme catalyses D-gluconate + ATP = 6-phospho-D-gluconate + ADP + H(+). Its pathway is carbohydrate acid metabolism; D-gluconate degradation. Its activity is regulated as follows. Catabolite repression by gluconate. This is Gluconokinase (gntK) from Bacillus licheniformis.